Reading from the N-terminus, the 441-residue chain is Nucleoprotein (441 aa).

At Ser-5 the chain carries Phosphoserine; by host. A CoV N NTD domain is found at 14 to 136; the sequence is VPLSLYAPLR…QLPSVVEIVE (123 aa). The RNA-binding stretch occupies residues 16 to 146; sequence LSLYAPLRVT…PNTPPASRAN (131 aa). Disordered stretches follow at residues 131-219 and 231-278; these read VVEI…VTSR and KSLG…LKDI. Ser-143 bears the Phosphoserine; by host mark. Residues 143–215 are compositionally biased toward low complexity; that stretch reads SRANSRSRSR…NRNQSNDRGG (73 aa). Basic and acidic residues-rich tracts occupy residues 238 to 255 and 269 to 278; these read NPDR…KSDN and TSKERDLKDI. Positions 266-382 constitute a CoV N CTD domain; the sequence is SRATSKERDL…AFKTGNAKLQ (117 aa). The interval 277–379 is dimerization; it reads DIPEWRRIPK…QVDAFKTGNA (103 aa).

It belongs to the alphacoronavirus nucleocapsid protein family. As to quaternary structure, homooligomer. Both monomeric and oligomeric forms interact with RNA. Interacts with protein M. Interacts with NSP3; this interaction serves to tether the genome to the newly translated replicase-transcriptase complex at a very early stage of infection. Interacts with host RSAD2; this interaction inhibits viral replication. In terms of processing, ADP-ribosylated. The ADP-ribosylation is retained in the virion during infection. Post-translationally, phosphorylated on serine and threonine residues.

It is found in the virion. It localises to the host endoplasmic reticulum-Golgi intermediate compartment. The protein resides in the host Golgi apparatus. Packages the positive strand viral genome RNA into a helical ribonucleocapsid (RNP) and plays a fundamental role during virion assembly through its interactions with the viral genome and membrane protein M. Plays an important role in enhancing the efficiency of subgenomic viral RNA transcription as well as viral replication. This Porcine epidemic diarrhea virus (strain CV777) (PEDV) protein is Nucleoprotein.